The following is a 159-amino-acid chain: 2-C-methyl-D-erythritol 2,4-cyclodiphosphate synthase (159 aa).

The a divalent metal cation site is built by aspartate 8 and histidine 10. 4-CDP-2-C-methyl-D-erythritol 2-phosphate-binding positions include 8–10 and 34–35; these read DVH and HS. An a divalent metal cation-binding site is contributed by histidine 42. 4-CDP-2-C-methyl-D-erythritol 2-phosphate-binding positions include 56 to 58, 132 to 135, and arginine 142; these read DIG and TTTE.

It belongs to the IspF family. In terms of assembly, homotrimer. A divalent metal cation serves as cofactor.

It carries out the reaction 4-CDP-2-C-methyl-D-erythritol 2-phosphate = 2-C-methyl-D-erythritol 2,4-cyclic diphosphate + CMP. The protein operates within isoprenoid biosynthesis; isopentenyl diphosphate biosynthesis via DXP pathway; isopentenyl diphosphate from 1-deoxy-D-xylulose 5-phosphate: step 4/6. Functionally, involved in the biosynthesis of isopentenyl diphosphate (IPP) and dimethylallyl diphosphate (DMAPP), two major building blocks of isoprenoid compounds. Catalyzes the conversion of 4-diphosphocytidyl-2-C-methyl-D-erythritol 2-phosphate (CDP-ME2P) to 2-C-methyl-D-erythritol 2,4-cyclodiphosphate (ME-CPP) with a corresponding release of cytidine 5-monophosphate (CMP). The sequence is that of 2-C-methyl-D-erythritol 2,4-cyclodiphosphate synthase from Chlorobium phaeobacteroides (strain BS1).